A 694-amino-acid polypeptide reads, in one-letter code: Pentatricopeptide repeat-containing protein At3g12770 (694 aa).

PPR repeat units follow at residues 52-82 (SGFLITKLIHASSSFGDITFARQVFDDLPRP), 83-117 (QIFPWNAIIRGYSRNNHFQDALLMYSNMQLARVSP), 118-152 (DSFTFPHLLKACSGLSHLQMGRFVHAQVFRLGFDA), 153-183 (DVFVQNGLIALYAKCRRLGSARTVFEGLPLP), 186-220 (TIVSWTAIVSAYAQNGEPMEALEIFSQMRKMDVKP), 221-255 (DWVALVSVLNAFTCLQDLKQGRSIHASVVKMGLEI), 256-286 (EPDLLISLNTMYAKCGQVATAKILFDKMKSP), 287-321 (NLILWNAMISGYAKNGYAREAIDMFHEMINKDVRP), 322-356 (DTISITSAISACAQVGSLEQARSMYEYVGRSDYRD), 357-387 (DVFISSALIDMFAKCGSVEGARLVFDRTLDR), 388-422 (DVVVWSAMIVGYGLHGRAREAISLYRAMERGGVHP), 423-457 (NDVTFLGLLMACNHSGMVREGWWFFNRMADHKINP), and 458-488 (QQQHYACVIDLLGRAGHLDQAYEVIKCMPVQ). Positions 493-568 (VWGALLSACK…DVGCSWVEVR (76 aa)) are type E motif. The type E(+) motif stretch occupies residues 569–599 (GRLEAFRVGDKSHPRYEEIERQVEWIESRLK). The tract at residues 600–694 (EGGFVANKDA…DGVCSCGDYW (95 aa)) is type DYW motif.

This sequence belongs to the PPR family. PCMP-H subfamily.

The protein is Pentatricopeptide repeat-containing protein At3g12770 (PCMP-H43) of Arabidopsis thaliana (Mouse-ear cress).